The chain runs to 188 residues: Acireductone dioxygenase (188 aa).

Histidine 97, histidine 99, glutamate 103, and histidine 141 together coordinate Fe(2+). Ni(2+) is bound by residues histidine 97, histidine 99, glutamate 103, and histidine 141.

The protein belongs to the acireductone dioxygenase (ARD) family. Monomer. Fe(2+) serves as cofactor. The cofactor is Ni(2+).

It catalyses the reaction 1,2-dihydroxy-5-(methylsulfanyl)pent-1-en-3-one + O2 = 3-(methylsulfanyl)propanoate + CO + formate + 2 H(+). It carries out the reaction 1,2-dihydroxy-5-(methylsulfanyl)pent-1-en-3-one + O2 = 4-methylsulfanyl-2-oxobutanoate + formate + 2 H(+). It participates in amino-acid biosynthesis; L-methionine biosynthesis via salvage pathway; L-methionine from S-methyl-5-thio-alpha-D-ribose 1-phosphate: step 5/6. In terms of biological role, catalyzes 2 different reactions between oxygen and the acireductone 1,2-dihydroxy-3-keto-5-methylthiopentene (DHK-MTPene) depending upon the metal bound in the active site. Fe-containing acireductone dioxygenase (Fe-ARD) produces formate and 2-keto-4-methylthiobutyrate (KMTB), the alpha-ketoacid precursor of methionine in the methionine recycle pathway. Ni-containing acireductone dioxygenase (Ni-ARD) produces methylthiopropionate, carbon monoxide and formate, and does not lie on the methionine recycle pathway. The polypeptide is Acireductone dioxygenase (Xanthomonas oryzae pv. oryzae (strain MAFF 311018)).